The following is a 469-amino-acid chain: 2-oxoisovalerate dehydrogenase subunit beta, mitochondrial (469 aa).

The transit peptide at 1 to 40 (MKRSTVVIRPSARALSRQASSQSFLLARSSALTSRQRRLY) directs the protein to the mitochondrion. Position 167 (tyrosine 167) interacts with thiamine diphosphate. K(+) is bound by residues glycine 194, leucine 196, and threonine 197.

In terms of assembly, heterotetramer of 2 alpha and 2 beta chains. Thiamine diphosphate is required as a cofactor.

It localises to the mitochondrion matrix. The enzyme catalyses N(6)-[(R)-lipoyl]-L-lysyl-[protein] + 3-methyl-2-oxobutanoate + H(+) = N(6)-[(R)-S(8)-2-methylpropanoyldihydrolipoyl]-L-lysyl-[protein] + CO2. In terms of biological role, the branched-chain alpha-keto dehydrogenase complex catalyzes the overall conversion of alpha-keto acids to acyl-CoA and CO(2). It contains multiple copies of three enzymatic components: branched-chain alpha-keto acid decarboxylase (E1), lipoamide acyltransferase (E2) and lipoamide dehydrogenase (E3). This chain is 2-oxoisovalerate dehydrogenase subunit beta, mitochondrial, found in Chaetomium thermophilum (strain DSM 1495 / CBS 144.50 / IMI 039719) (Thermochaetoides thermophila).